We begin with the raw amino-acid sequence, 155 residues long: Large ribosomal subunit protein eL24B (155 aa).

Ser-7 carries the phosphoserine modification. The interval 66–155 (EVAKKRSRKT…AFQKVAATSR (90 aa)) is disordered. The segment covering 89 to 129 (LIKERRSLKPEVRKANREEKLKANKEKKRAEKAARKAEKAK) has biased composition (basic and acidic residues).

Belongs to the eukaryotic ribosomal protein eL24 family. Component of the large ribosomal subunit (LSU). Mature yeast ribosomes consist of a small (40S) and a large (60S) subunit. The 40S small subunit contains 1 molecule of ribosomal RNA (18S rRNA) and 33 different proteins (encoded by 57 genes). The large 60S subunit contains 3 rRNA molecules (25S, 5.8S and 5S rRNA) and 46 different proteins (encoded by 81 genes).

It is found in the cytoplasm. Its function is as follows. Component of the ribosome, a large ribonucleoprotein complex responsible for the synthesis of proteins in the cell. The small ribosomal subunit (SSU) binds messenger RNAs (mRNAs) and translates the encoded message by selecting cognate aminoacyl-transfer RNA (tRNA) molecules. The large subunit (LSU) contains the ribosomal catalytic site termed the peptidyl transferase center (PTC), which catalyzes the formation of peptide bonds, thereby polymerizing the amino acids delivered by tRNAs into a polypeptide chain. The nascent polypeptides leave the ribosome through a tunnel in the LSU and interact with protein factors that function in enzymatic processing, targeting, and the membrane insertion of nascent chains at the exit of the ribosomal tunnel. The sequence is that of Large ribosomal subunit protein eL24B from Saccharomyces cerevisiae (strain ATCC 204508 / S288c) (Baker's yeast).